Consider the following 436-residue polypeptide: 3-ketoacyl-CoA thiolase (436 aa).

Catalysis depends on C99, which acts as the Acyl-thioester intermediate. Catalysis depends on proton acceptor residues H392 and C422.

It belongs to the thiolase-like superfamily. Thiolase family. In terms of assembly, heterotetramer of two alpha chains (FadJ) and two beta chains (FadI).

Its subcellular location is the cytoplasm. It catalyses the reaction an acyl-CoA + acetyl-CoA = a 3-oxoacyl-CoA + CoA. It functions in the pathway lipid metabolism; fatty acid beta-oxidation. Functionally, catalyzes the final step of fatty acid oxidation in which acetyl-CoA is released and the CoA ester of a fatty acid two carbons shorter is formed. The protein is 3-ketoacyl-CoA thiolase of Aeromonas salmonicida (strain A449).